A 380-amino-acid chain; its full sequence is QRFP-like peptide receptor (380 aa).

At 1–51 (MMLGNMTFTQTILHELLRQHNMTKNEFIERFGLPPLVYVPELSPGAKTVTL) the chain is on the extracellular side. Asn5 and Asn21 each carry an N-linked (GlcNAc...) asparagine glycan. Residues 52–72 (VFYVIIFLAALLGNTLVVVVV) form a helical membrane-spanning segment. Residues 73–83 (WKNKVMRTTMN) are Cytoplasmic-facing. The helical transmembrane segment at 84–104 (IFICSLAASDLLITIVCIPVT) threads the bilayer. Residues 105 to 122 (LMQNMLQNWIMGDFMCKL) lie on the Extracellular side of the membrane. Cysteines 120 and 203 form a disulfide. A helical membrane pass occupies residues 123 to 143 (VPFIQTIAVASSILTLTGIAI). The Cytoplasmic segment spans residues 144–164 (ERYYAIIHPLKVKYLLSKTRA). A helical transmembrane segment spans residues 165-185 (GIILALVWVVSVGVATPMLFV). Residues 186-216 (HKAEEIHDFLYEQRFVTCQEKWWGQTQQTSY) are Extracellular-facing. The chain crosses the membrane as a helical span at residues 217–237 (TIFNLVVLFIIPLLTMTSLYI). The Cytoplasmic portion of the chain corresponds to 238–269 (RIAHRLWVQQPVGVTGNFAHGNSVRRKRQAVK). The helical transmembrane segment at 270-290 (MLVVVVLLFAVCWLPYHTVTV) threads the bilayer. The Extracellular segment spans residues 291 to 305 (MNELTGLRLEEKSAK). Residues 306-326 (LLIAIVQLIAFSNSFNNPVVY) form a helical membrane-spanning segment. Over 327 to 380 (AILNENFKKNFMTMLRCRVNRVSPQQVTPNTLQTPLEQSTRSCRLPAGAPNQQI) the chain is Cytoplasmic.

This sequence belongs to the G-protein coupled receptor 1 family.

Its subcellular location is the cell membrane. Receptor for QRFP-like peptide. The activity of this receptor is mediated by G proteins which activate a phosphatidyl-inositol-calcium second messenger system. The sequence is that of QRFP-like peptide receptor from Branchiostoma floridae (Florida lancelet).